Consider the following 61-residue polypeptide: Small ribosomal subunit protein uS14 (61 aa).

The Zn(2+) site is built by Cys24, Cys27, Cys40, and Cys43.

It belongs to the universal ribosomal protein uS14 family. Zinc-binding uS14 subfamily. Part of the 30S ribosomal subunit. Contacts proteins S3 and S10. The cofactor is Zn(2+).

Binds 16S rRNA, required for the assembly of 30S particles and may also be responsible for determining the conformation of the 16S rRNA at the A site. This Desulfatibacillum aliphaticivorans protein is Small ribosomal subunit protein uS14.